A 378-amino-acid polypeptide reads, in one-letter code: P2X receptor A (378 aa).

At 1 to 27 the chain is on the cytoplasmic side; that stretch reads MGFSFDWDDIFQYSTVKIVRIRDRRLG. Residues 28–48 form a helical membrane-spanning segment; sequence ILHLSFLVGIVAYIVVYSAII. Over 49–307 the chain is Lumenal; that stretch reads KKGYLFTEVP…IQTGTIGSFH (259 aa). Positions 290–303 are pore-forming motif; that stretch reads RHGIRVIFIQTGTI. The helical transmembrane segment at 308-328 threads the bilayer; sequence FQTLLLTLVSGLGLLAVATTV. Over 329 to 378 the chain is Cytoplasmic; the sequence is VDQLAIRLLPQRKSYSSLKFQVTESMSNPMKKRITTDEGEDVLYTRIEGL.

The protein belongs to the P2X receptor family.

The protein localises to the contractile vacuole membrane. Its function is as follows. P2X receptors are ATP-gated ion channels that play a role in intracellular calcium signaling. Not required for the purinergic response to extracellular nucleotides. Inward currents evoked by intracellular ATP and ATP analogs. Exclusively selective for ATP over other nucleotides. Insensitive to P2 receptor antagonists PPADS, suramin and 2',3'-O-(2,4,6-trinitrophenyl)-ATP but inhibited by nanomolar concentrations of copper and sodium ion. More permeable to ammonium than either sodium or potassium ions and less permeable to choline. It has been reported that p2xA is not essential for osmoregulation, however this information is in contradiction with another source which indicates that p2xA is required for osmoregulation. Found to be permeable to chloride ions. Inhibited by copper and sodium ions. This Dictyostelium discoideum (Social amoeba) protein is P2X receptor A (p2xA).